The sequence spans 251 residues: Probable transcriptional regulatory protein jk1057 (251 aa).

A disordered region spans residues 1–22 (MAGHSKWATTKHKKAANDAKRG).

Belongs to the TACO1 family.

The protein resides in the cytoplasm. This is Probable transcriptional regulatory protein jk1057 from Corynebacterium jeikeium (strain K411).